The following is a 250-amino-acid chain: 5-oxoprolinase subunit A (250 aa).

This sequence belongs to the LamB/PxpA family. In terms of assembly, forms a complex composed of PxpA, PxpB and PxpC.

It carries out the reaction 5-oxo-L-proline + ATP + 2 H2O = L-glutamate + ADP + phosphate + H(+). Its function is as follows. Catalyzes the cleavage of 5-oxoproline to form L-glutamate coupled to the hydrolysis of ATP to ADP and inorganic phosphate. This is 5-oxoprolinase subunit A from Staphylococcus aureus (strain Mu3 / ATCC 700698).